Consider the following 220-residue polypeptide: Ribosomal RNA large subunit methyltransferase E (220 aa).

Residues G60, W62, D92, D108, and D133 each contribute to the S-adenosyl-L-methionine site. The active-site Proton acceptor is K173.

The protein belongs to the class I-like SAM-binding methyltransferase superfamily. RNA methyltransferase RlmE family.

It is found in the cytoplasm. The enzyme catalyses uridine(2552) in 23S rRNA + S-adenosyl-L-methionine = 2'-O-methyluridine(2552) in 23S rRNA + S-adenosyl-L-homocysteine + H(+). Its function is as follows. Specifically methylates the uridine in position 2552 of 23S rRNA at the 2'-O position of the ribose in the fully assembled 50S ribosomal subunit. In Paraburkholderia phymatum (strain DSM 17167 / CIP 108236 / LMG 21445 / STM815) (Burkholderia phymatum), this protein is Ribosomal RNA large subunit methyltransferase E.